A 718-amino-acid chain; its full sequence is Heat shock 70 kDa protein 6, chloroplastic (718 aa).

The transit peptide at 1 to 92 directs the protein to the chloroplast; that stretch reads MASSAAQIHV…IDLGTTNSAV (92 aa). The disordered stretch occupies residues 671–718; the sequence is QSLYNQPGAGGPGAGPSPGGEGASSGDSSSSKGGDGDDVIDADFTDSQ. Residues 678–693 are compositionally biased toward gly residues; it reads GAGGPGAGPSPGGEGA. A compositionally biased stretch (acidic residues) spans 706–718; sequence GDDVIDADFTDSQ.

This sequence belongs to the heat shock protein 70 (TC 1.A.33) family. DnaK subfamily. Interacts with geminivirus movement protein (MP).

The protein resides in the plastid. It localises to the chloroplast stroma. Acts redundantly with HSP70-7 in the thermotolerance of germinating seeds. Plays an important role in the protein precursor import into chloroplasts. In terms of biological role, in cooperation with other chaperones, Hsp70s are key components that facilitate folding of de novo synthesized proteins, assist translocation of precursor proteins into organelles, and are responsible for degradation of damaged protein under stress conditions. In Arabidopsis thaliana (Mouse-ear cress), this protein is Heat shock 70 kDa protein 6, chloroplastic (HSP70-6).